Here is a 239-residue protein sequence, read N- to C-terminus: Fatty acid metabolism regulator protein (239 aa).

The HTH gntR-type domain maps to 6 to 74 (QSPAGFAEEY…HGKPTKVNNF (69 aa)). The H-T-H motif DNA-binding region spans 34-53 (ERELSELIGVTRTTLREVLQ).

Homodimer.

The protein resides in the cytoplasm. Its function is as follows. Multifunctional regulator of fatty acid metabolism. This chain is Fatty acid metabolism regulator protein, found in Serratia proteamaculans (strain 568).